The primary structure comprises 540 residues: DEAD-box ATP-dependent RNA helicase 57 (540 aa).

The segment at 24–73 (DFARFRQGPPAPDVASAAAPSPEKKRKRQSKAKAKKSKKRRAEGADSASD) is disordered. Residues 47 to 64 (KKRKRQSKAKAKKSKKRR) are compositionally biased toward basic residues. A coiled-coil region spans residues 101 to 129 (KSEDSEVVRRRKEVEREIERAAILRKKFD). The Q motif signature appears at 146–174 (ELVSRYGCDSYLVGNLSKLGFQEPTPIQR). One can recognise a Helicase ATP-binding domain in the interval 177 to 347 (IPILLSGREC…RTIMHDAVRV (171 aa)). Position 190-197 (190-197 (APTGSGKT)) interacts with ATP. The DEAD box motif lies at 294-297 (DESD). The region spanning 375–519 (ALRQSFAESL…EVPSWIKALP (145 aa)) is the Helicase C-terminal domain.

It belongs to the DEAD box helicase family. DDX52/ROK1 subfamily.

The enzyme catalyses ATP + H2O = ADP + phosphate + H(+). In Oryza sativa subsp. japonica (Rice), this protein is DEAD-box ATP-dependent RNA helicase 57.